Consider the following 69-residue polypeptide: Sec-independent protein translocase protein TatA (69 aa).

Residues 1–21 (MMPGPFELIIILVIVLLLFGG) traverse the membrane as a helical segment.

Belongs to the TatA/E family. As to quaternary structure, the Tat system comprises two distinct complexes: a TatABC complex, containing multiple copies of TatA, TatB and TatC subunits, and a separate TatA complex, containing only TatA subunits. Substrates initially bind to the TatABC complex, which probably triggers association of the separate TatA complex to form the active translocon.

Its subcellular location is the cell inner membrane. Functionally, part of the twin-arginine translocation (Tat) system that transports large folded proteins containing a characteristic twin-arginine motif in their signal peptide across membranes. TatA could form the protein-conducting channel of the Tat system. In Vesicomyosocius okutanii subsp. Calyptogena okutanii (strain HA), this protein is Sec-independent protein translocase protein TatA.